The chain runs to 268 residues: MINIQNTILGKIVDRKHEELAARLKQRNLQDVEELAKAATPVRGFANALQHKRPGVIAEIKKASPSKGIIRADFNPAEIAQQYEQAGAACLSVLTDVDFFQGADENIAIARNHCALPALRKDFLVDPYNVVEARALHADCILLIVACLSDQQLEEMSKTAFEHQLDVLVEVHDEEELERALKLSEQCLLGVNNRNLKTFDVDLNTTIRLKKLLPASRLLITESGIATPDDVRMMQEHDIHSFLVGESFMKQPRPDQAFTALFGQPQTV.

This sequence belongs to the TrpC family.

It carries out the reaction 1-(2-carboxyphenylamino)-1-deoxy-D-ribulose 5-phosphate + H(+) = (1S,2R)-1-C-(indol-3-yl)glycerol 3-phosphate + CO2 + H2O. It functions in the pathway amino-acid biosynthesis; L-tryptophan biosynthesis; L-tryptophan from chorismate: step 4/5. The sequence is that of Indole-3-glycerol phosphate synthase from Acinetobacter baumannii (strain AB0057).